We begin with the raw amino-acid sequence, 492 residues long: Argininosuccinate lyase (492 aa).

This sequence belongs to the lyase 1 family. Argininosuccinate lyase subfamily.

The protein resides in the cytoplasm. The catalysed reaction is 2-(N(omega)-L-arginino)succinate = fumarate + L-arginine. Its pathway is amino-acid biosynthesis; L-arginine biosynthesis; L-arginine from L-ornithine and carbamoyl phosphate: step 3/3. The chain is Argininosuccinate lyase from Methanocorpusculum labreanum (strain ATCC 43576 / DSM 4855 / Z).